Reading from the N-terminus, the 156-residue chain is Ribosomal RNA large subunit methyltransferase H (156 aa).

S-adenosyl-L-methionine-binding positions include Leu-73, Gly-104, and 123–128 (VSSLTL).

It belongs to the RNA methyltransferase RlmH family. In terms of assembly, homodimer.

The protein resides in the cytoplasm. It carries out the reaction pseudouridine(1915) in 23S rRNA + S-adenosyl-L-methionine = N(3)-methylpseudouridine(1915) in 23S rRNA + S-adenosyl-L-homocysteine + H(+). Functionally, specifically methylates the pseudouridine at position 1915 (m3Psi1915) in 23S rRNA. This chain is Ribosomal RNA large subunit methyltransferase H, found in Burkholderia thailandensis (strain ATCC 700388 / DSM 13276 / CCUG 48851 / CIP 106301 / E264).